The primary structure comprises 411 residues: UPF0761 membrane protein PA14_51960 (411 aa).

The next 6 helical transmembrane spans lie at 36–56 (LFAVVPMMTVMFSMLSLIPAF), 92–112 (HLTWVGVVFLAVTAFTMLVTI), 132–152 (FLLYWAILSLGPLLLGAGFAV), 174–194 (LLGLMPLAFSVAAFTLLYSAV), 207–229 (GGVFTAVLFEAAKTLFGLYVSLF), and 244–264 (IFLLWIYLSWMIVLFGAVLVC).

This sequence belongs to the UPF0761 family.

It is found in the cell inner membrane. The polypeptide is UPF0761 membrane protein PA14_51960 (Pseudomonas aeruginosa (strain UCBPP-PA14)).